Here is a 113-residue protein sequence, read N- to C-terminus: uncharacterized protein (113 aa).

Residues 16–113 enclose the HTH hxlR-type domain; it reads TPFGYTLSLI…CEWGVKNQNN (98 aa).

This is an uncharacterized protein from Halalkalibacterium halodurans (strain ATCC BAA-125 / DSM 18197 / FERM 7344 / JCM 9153 / C-125) (Bacillus halodurans).